We begin with the raw amino-acid sequence, 186 residues long: Ribosome-recycling factor (186 aa).

Belongs to the RRF family.

The protein resides in the cytoplasm. Its function is as follows. Responsible for the release of ribosomes from messenger RNA at the termination of protein biosynthesis. May increase the efficiency of translation by recycling ribosomes from one round of translation to another. This chain is Ribosome-recycling factor, found in Amoebophilus asiaticus (strain 5a2).